Consider the following 514-residue polypeptide: Ammonium transporter 1 member 2 (514 aa).

11 helical membrane passes run 56 to 76 (LLFSAYLVFAMQLGFAMLCAG), 91 to 111 (VLDAAAGAISYYLFGFAFAFG), 140 to 160 (FFLYQWAFAIAAAGITSGSIA), 165 to 185 (FVAYLIYSTFLTGFVYPTVSH), 212 to 232 (FAGSGVVHMVGGIAGLCGALV), 257 to 277 (VVLGTFLLWFGWYGFNPGSFL), 291 to 313 (GQWSAVGRTAVTTTLSGCTAALT), 328 to 348 (IDVCNGLLGGFAAITSGCAVV), 351 to 371 (WAAIVCGFVASWVLIGFNLLA), 380 to 400 (LEAAQLHGGCGAWGLIFTGLF), and 431 to 451 (IVQIIVIVGWVTVTMGPLFYG). A Phosphothreonine modification is found at Thr472.

It belongs to the ammonia transporter channel (TC 1.A.11.2) family. As to expression, high expression in root.

The protein localises to the membrane. In terms of biological role, ammonium transporter probably involved in ammonium uptake from the soil. In Arabidopsis thaliana (Mouse-ear cress), this protein is Ammonium transporter 1 member 2 (AMT1-2).